Reading from the N-terminus, the 505-residue chain is Lysine--tRNA ligase, heat inducible (505 aa).

Lys-114 and Lys-156 each carry N6-acetyllysine. Residues Glu-415 and Glu-422 each coordinate Mg(2+).

This sequence belongs to the class-II aminoacyl-tRNA synthetase family. As to quaternary structure, homodimer. Requires Mg(2+) as cofactor.

It is found in the cytoplasm. It catalyses the reaction tRNA(Lys) + L-lysine + ATP = L-lysyl-tRNA(Lys) + AMP + diphosphate. The protein is Lysine--tRNA ligase, heat inducible (lysU) of Escherichia coli O157:H7.